Reading from the N-terminus, the 364-residue chain is Fructose-bisphosphate aldolase A (364 aa).

Position 5 is a phosphotyrosine (tyrosine 5). A Phosphothreonine modification is found at threonine 9. Phosphoserine occurs at positions 36 and 39. An N6-acetyllysine; alternate modification is found at lysine 42. Lysine 42 is covalently cross-linked (Glycyl lysine isopeptide (Lys-Gly) (interchain with G-Cter in SUMO1); alternate). Lysine 42 is covalently cross-linked (Glycyl lysine isopeptide (Lys-Gly) (interchain with G-Cter in SUMO2); alternate). Position 43 (arginine 43) interacts with beta-D-fructose 1,6-bisphosphate. Serine 46 carries the phosphoserine modification. Lysine 99 is modified (N6-(2-hydroxyisobutyryl)lysine). An N6-acetyllysine modification is found at lysine 108. Lysine 111 is modified (N6-acetyllysine; alternate). Lysine 111 carries the N6-malonyllysine; alternate modification. Serine 132 is subject to Phosphoserine. Lysine 147 bears the N6-(2-hydroxyisobutyryl)lysine mark. Glutamate 188 acts as the Proton acceptor in catalysis. Catalysis depends on lysine 230, which acts as the Schiff-base intermediate with dihydroxyacetone-P. Position 272 is a phosphoserine (serine 272). Residues 272–274 (SGG), serine 301, and arginine 304 each bind beta-D-fructose 1,6-bisphosphate. Residue lysine 312 is modified to N6-malonyllysine. N6-acetyllysine is present on lysine 330.

Belongs to the class I fructose-bisphosphate aldolase family. Homotetramer. Interacts with SNX9 and WAS. Interacts with FBP2; the interaction blocks FBP2 inhibition by physiological concentrations of AMP and reduces inhibition by Ca(2+).

The protein resides in the cytoplasm. The protein localises to the myofibril. Its subcellular location is the sarcomere. It localises to the i band. It is found in the m line. It catalyses the reaction beta-D-fructose 1,6-bisphosphate = D-glyceraldehyde 3-phosphate + dihydroxyacetone phosphate. The protein operates within carbohydrate degradation; glycolysis; D-glyceraldehyde 3-phosphate and glycerone phosphate from D-glucose: step 4/4. Its function is as follows. Catalyzes the reversible conversion of beta-D-fructose 1,6-bisphosphate (FBP) into two triose phosphate and plays a key role in glycolysis and gluconeogenesis. In addition, may also function as scaffolding protein. In Pongo abelii (Sumatran orangutan), this protein is Fructose-bisphosphate aldolase A (ALDOA).